A 364-amino-acid polypeptide reads, in one-letter code: Selenide, water dikinase (364 aa).

Sec-25 is a catalytic residue. A non-standard amino acid (selenocysteine) is located at residue Sec-25. ATP contacts are provided by residues Lys-28, 46–48 (GYD), Asp-66, Asp-89, and 141–143 (GQT). Asp-48 is a Mg(2+) binding site. Asp-89 is a Mg(2+) binding site. Position 244 (Asp-244) interacts with Mg(2+).

Belongs to the selenophosphate synthase 1 family. Class II subfamily. In terms of assembly, homodimer. Mg(2+) serves as cofactor.

It catalyses the reaction hydrogenselenide + ATP + H2O = selenophosphate + AMP + phosphate + 2 H(+). Its function is as follows. Synthesizes selenophosphate from selenide and ATP. This chain is Selenide, water dikinase (selD), found in Dictyostelium discoideum (Social amoeba).